The sequence spans 299 residues: ATP phosphoribosyltransferase (299 aa).

This sequence belongs to the ATP phosphoribosyltransferase family. Long subfamily. Equilibrium between an active dimeric form, an inactive hexameric form and higher aggregates. Interconversion between the various forms is largely reversible and is influenced by the natural substrates and inhibitors of the enzyme. The cofactor is Mg(2+).

The protein resides in the cytoplasm. The catalysed reaction is 1-(5-phospho-beta-D-ribosyl)-ATP + diphosphate = 5-phospho-alpha-D-ribose 1-diphosphate + ATP. It functions in the pathway amino-acid biosynthesis; L-histidine biosynthesis; L-histidine from 5-phospho-alpha-D-ribose 1-diphosphate: step 1/9. With respect to regulation, feedback inhibited by histidine. In terms of biological role, catalyzes the condensation of ATP and 5-phosphoribose 1-diphosphate to form N'-(5'-phosphoribosyl)-ATP (PR-ATP). Has a crucial role in the pathway because the rate of histidine biosynthesis seems to be controlled primarily by regulation of HisG enzymatic activity. The polypeptide is ATP phosphoribosyltransferase (hisG) (Buchnera aphidicola subsp. Schizaphis graminum (strain Sg)).